The sequence spans 229 residues: Coiled-coil domain-containing protein 134 (229 aa).

Positions 1 to 22 (MDLLQSLAVFFVLLLPGTEVTG) are cleaved as a signal peptide. N-linked (GlcNAc...) asparagine glycosylation occurs at N148. The interval 191–229 (PSTDPFQKALREEEKRRKKEEKRKEIRKGPRISRSQSEL) is disordered. Residues 196 to 218 (FQKALREEEKRRKKEEKRKEIRK) are a coiled coil. The Prevents secretion from ER motif lies at 226 to 229 (QSEL).

It belongs to the CCDC134 family. In terms of assembly, interacts with TADA2A. Associates with the PCAF complex via TADA2A binding. O-glycosylated, with additional sialic acid modifications.

The protein resides in the endoplasmic reticulum lumen. The protein localises to the secreted. Its subcellular location is the cytoplasm. It is found in the nucleus. In terms of biological role, molecular adapter required to prevent protein hyperglycosylation of HSP90B1: during translation, associates with nascent HSP90B1 and the STT3A catalytic component of the OST-A complex and tethers them to a specialized translocon that forms a microenvironment for HSP90B1 folding. In the CCDC134-containing translocon, STT3A associates with the SRT pseudosubstrate motif of HSP90B1, preventing access to facultative glycosylation sites until folding is completed, preventing hyperglycosylation and subsequent degradation of HSP90B1. In extracellular secreted form, promotes proliferation and activation of CD8(+) T-cells, suggesting a cytokine-like function. May inhibit ERK and JNK signaling activity. May suppress cell migration and invasion activity, via its effects on ERK and JNK signaling. May also localize in the nucleus: enhances stability of the PCAF histone acetyltransferase (HAT) complex member TADA2A and thus promotes PCAF-mediated histone acetyltransferase activity. Has a critical role in the regulation of osteogenesis and bone development. The sequence is that of Coiled-coil domain-containing protein 134 (Ccdc134) from Rattus norvegicus (Rat).